A 396-amino-acid polypeptide reads, in one-letter code: Phosphoglycerate kinase (396 aa).

Substrate-binding positions include 21 to 23, Arg36, 59 to 62, Arg118, and Arg151; these read DFN and HFDR. Residues Lys201, Glu323, and 353-356 contribute to the ATP site; that span reads GGDT.

Belongs to the phosphoglycerate kinase family. As to quaternary structure, monomer.

It is found in the cytoplasm. It carries out the reaction (2R)-3-phosphoglycerate + ATP = (2R)-3-phospho-glyceroyl phosphate + ADP. It participates in carbohydrate degradation; glycolysis; pyruvate from D-glyceraldehyde 3-phosphate: step 2/5. This Caulobacter vibrioides (strain ATCC 19089 / CIP 103742 / CB 15) (Caulobacter crescentus) protein is Phosphoglycerate kinase.